Here is a 120-residue protein sequence, read N- to C-terminus: Ribonuclease P protein component (120 aa).

The protein belongs to the RnpA family. Consists of a catalytic RNA component (M1 or rnpB) and a protein subunit.

It carries out the reaction Endonucleolytic cleavage of RNA, removing 5'-extranucleotides from tRNA precursor.. RNaseP catalyzes the removal of the 5'-leader sequence from pre-tRNA to produce the mature 5'-terminus. It can also cleave other RNA substrates such as 4.5S RNA. The protein component plays an auxiliary but essential role in vivo by binding to the 5'-leader sequence and broadening the substrate specificity of the ribozyme. The protein is Ribonuclease P protein component of Mycobacterium leprae (strain Br4923).